The chain runs to 65 residues: DNA-directed RNA polymerase subunit omega (65 aa).

This sequence belongs to the RNA polymerase subunit omega family. As to quaternary structure, the RNAP catalytic core consists of 2 alpha, 1 beta, 1 beta' and 1 omega subunit. When a sigma factor is associated with the core the holoenzyme is formed, which can initiate transcription.

The catalysed reaction is RNA(n) + a ribonucleoside 5'-triphosphate = RNA(n+1) + diphosphate. In terms of biological role, promotes RNA polymerase assembly. Latches the N- and C-terminal regions of the beta' subunit thereby facilitating its interaction with the beta and alpha subunits. This is DNA-directed RNA polymerase subunit omega from Finegoldia magna (strain ATCC 29328 / DSM 20472 / WAL 2508) (Peptostreptococcus magnus).